The primary structure comprises 127 residues: Major sperm protein 38 (127 aa).

Ala-2 is modified (N-acetylalanine). The 118-residue stretch at Asp-9 to Asn-126 folds into the MSP domain.

Sperm.

It localises to the cell projection. Its subcellular location is the pseudopodium. The protein localises to the cytoplasm. It is found in the cytoskeleton. Its function is as follows. Central component in molecular interactions underlying sperm crawling. Forms an extensive filament system that extends from sperm villipoda, along the leading edge of the pseudopod. The sequence is that of Major sperm protein 38 (msp-38) from Caenorhabditis elegans.